We begin with the raw amino-acid sequence, 501 residues long: Cytochrome P450 90A4 (501 aa).

The helical transmembrane segment at 2–22 (AAAALLLLAAAAAAVVVAMAL) threads the bilayer. Cys446 contacts heme.

Belongs to the cytochrome P450 family. It depends on heme as a cofactor.

It localises to the membrane. It functions in the pathway plant hormone biosynthesis; brassinosteroid biosynthesis. Its function is as follows. Catalyzes the C23-alpha-hydroxylation step in brassinosteroid biosynthesis. Converts 6-deoxocathasterone to 6-deoxoteasterone in the late C6-oxidation pathway and cathasterone to teasterone (TE) in the early C6-oxidation pathway of brassinolide (BL) biosynthesis. The protein is Cytochrome P450 90A4 of Oryza sativa subsp. indica (Rice).